Here is a 359-residue protein sequence, read N- to C-terminus: Transcription factor bHLH130 (359 aa).

Residue Ser-60 is modified to Phosphoserine. The tract at residues 161–186 is disordered; the sequence is EEDEESPSNSNGLRRHCSLSSRPPSS. The segment covering 167–184 has biased composition (polar residues); the sequence is PSNSNGLRRHCSLSSRPP. The bHLH domain occupies 285–335; that stretch reads CATHPRSIAERVRRTRISERMRKLQELVPNMDKQTNTSDMLDLAVDYIKDL.

As to quaternary structure, homodimer.

The protein resides in the nucleus. This Arabidopsis thaliana (Mouse-ear cress) protein is Transcription factor bHLH130 (BHLH130).